We begin with the raw amino-acid sequence, 144 residues long: Maximins 2/H8 type 1 (144 aa).

The N-terminal stretch at 1-18 is a signal peptide; sequence MNFKYIVAVSFLIASAYA. Positions 19 to 43 are excised as a propeptide; it reads RSEENEIQSLSQRDVLEEESLREMR. Asn-70 bears the Asparagine amide mark. Positions 74 to 123 are excised as a propeptide; the sequence is TAEEHEVMKRLETVMRDLDSLDYPEEASERETRGFNQEEIANLFTKKEKR. Ile-143 carries the post-translational modification Isoleucine amide.

This sequence belongs to the bombinin family. As to expression, expressed by the skin glands.

It is found in the secreted. Its function is as follows. Maximin-2 shows antibacterial activity against both Gram-positive and Gram-negative bacteria. It also shows antimicrobial activity against the fungus C.albicans, but not against A.flavus nor P.uticale. It has little hemolytic activity. In terms of biological role, maximin-H8 shows antimicrobial activity against bacteria and against the fungus C.albicans. Shows strong hemolytic activity. The polypeptide is Maximins 2/H8 type 1 (Bombina maxima (Giant fire-bellied toad)).